The primary structure comprises 263 residues: Putative steroid dehydrogenase 4 (263 aa).

Tyr154 acts as the Proton acceptor in catalysis.

It belongs to the short-chain dehydrogenases/reductases (SDR) family. 17-beta-HSD 3 subfamily.

The sequence is that of Putative steroid dehydrogenase 4 (stdh-4) from Caenorhabditis elegans.